We begin with the raw amino-acid sequence, 647 residues long: Putative pre-mRNA-splicing factor ATP-dependent RNA helicase C20H4.09 (647 aa).

The Helicase ATP-binding domain maps to 35 to 199 (LYAVEQNQIT…FGQDKVCTMS (165 aa)). 48 to 55 (GHTGCGKT) is an ATP binding site. The DEAH box signature appears at 146 to 149 (DEVH). A Helicase C-terminal domain is found at 219–398 (YVDSAIETVI…PLVLFLKGLG (180 aa)).

This sequence belongs to the DEAD box helicase family. DEAH subfamily.

It localises to the nucleus. It catalyses the reaction ATP + H2O = ADP + phosphate + H(+). In terms of biological role, pre-mRNA processing factor involved in disassembly of spliceosomes after the release of mature mRNA. In Schizosaccharomyces pombe (strain 972 / ATCC 24843) (Fission yeast), this protein is Putative pre-mRNA-splicing factor ATP-dependent RNA helicase C20H4.09.